A 224-amino-acid polypeptide reads, in one-letter code: 2,5-diamino-6-ribosylamino-4(3H)-pyrimidinone 5'-phosphate reductase (224 aa).

NADP(+) is bound by residues Gly16, Thr57, Asp61, 83–86 (SKLR), Val134, and 156–159 (GGTL).

Belongs to the HTP reductase family. Homodimer.

The enzyme catalyses 2,5-diamino-6-(1-D-ribitylamino)pyrimidin-4(3H)-one 5'-phosphate + NADP(+) = 2,5-diamino-6-(1-D-ribosylamino)pyrimidin-4(3H)-one 5'-phosphate + NADPH + H(+). It carries out the reaction 2,5-diamino-6-(1-D-ribitylamino)pyrimidin-4(3H)-one 5'-phosphate + NAD(+) = 2,5-diamino-6-(1-D-ribosylamino)pyrimidin-4(3H)-one 5'-phosphate + NADH + H(+). It participates in cofactor biosynthesis; riboflavin biosynthesis. In terms of biological role, catalyzes an early step in riboflavin biosynthesis, the NAD(P)H-dependent reduction of the ribose side chain of 2,5-diamino-6-ribosylamino-4(3H)-pyrimidinone 5'-phosphate, yielding 2,5-diamino-6-ribitylamino-4(3H)-pyrimidinone 5'-phosphate. The beta anomer is the authentic substrate, and the alpha anomer can serve as substrate subsequent to spontaneous anomerization. NADPH and NADH function equally well as the reductants. Does not catalyze the reduction of 5-amino-6-(5-phospho-D-ribosylamino)uracil to 5-amino-6-(5-phospho-D-ribitylamino)uracil. This Methanocaldococcus jannaschii (strain ATCC 43067 / DSM 2661 / JAL-1 / JCM 10045 / NBRC 100440) (Methanococcus jannaschii) protein is 2,5-diamino-6-ribosylamino-4(3H)-pyrimidinone 5'-phosphate reductase (arfC).